A 184-amino-acid polypeptide reads, in one-letter code: ADP-ribosylation factor-like protein 2 (184 aa).

Gly2 carries the N-myristoyl glycine lipid modification. GTP is bound by residues 23-30, 66-70, and 125-128; these read GLDNAGKT, DIGGQ, and NKQD.

Belongs to the small GTPase superfamily. Arf family.

May be involved in trafficking events within the endosomal system. This chain is ADP-ribosylation factor-like protein 2 (arl2), found in Dictyostelium discoideum (Social amoeba).